A 432-amino-acid polypeptide reads, in one-letter code: UDP-N-acetylglucosamine 1-carboxyvinyltransferase (432 aa).

22-23 (KN) contributes to the phosphoenolpyruvate binding site. R92 is a UDP-N-acetyl-alpha-D-glucosamine binding site. Catalysis depends on C116, which acts as the Proton donor. A 2-(S-cysteinyl)pyruvic acid O-phosphothioketal modification is found at C116. Residues 121–125 (RPVDQ), D307, and I329 each bind UDP-N-acetyl-alpha-D-glucosamine.

It belongs to the EPSP synthase family. MurA subfamily.

Its subcellular location is the cytoplasm. It catalyses the reaction phosphoenolpyruvate + UDP-N-acetyl-alpha-D-glucosamine = UDP-N-acetyl-3-O-(1-carboxyvinyl)-alpha-D-glucosamine + phosphate. The protein operates within cell wall biogenesis; peptidoglycan biosynthesis. In terms of biological role, cell wall formation. Adds enolpyruvyl to UDP-N-acetylglucosamine. The sequence is that of UDP-N-acetylglucosamine 1-carboxyvinyltransferase from Psychrobacter sp. (strain PRwf-1).